We begin with the raw amino-acid sequence, 519 residues long: Sorting nexin-2 (519 aa).

The disordered stretch occupies residues 1-104 (MAAEREPPPL…EPSPAVTPVT (104 aa)). Composition is skewed to low complexity over residues 27-50 (LFTS…LPAE) and 93-104 (SSEPSPAVTPVT). Phosphoserine is present on serine 97. Phosphothreonine is present on residues threonine 101 and threonine 104. Phosphoserine is present on residues serine 117 and serine 119. The 130-residue stretch at 140-269 (FDIEIGVSDP…QFLESSELPR (130 aa)) folds into the PX domain. Residues arginine 183, serine 185, lysine 211, and arginine 235 each coordinate a 1,2-diacyl-sn-glycero-3-phospho-(1D-myo-inositol-3-phosphate). Position 185 is a phosphoserine (serine 185). An interaction with RhoG region spans residues 260–519 (QFLESSELPR…AFLPEAKAIA (260 aa)). Phosphoserine is present on serine 277. The membrane-binding amphipathic helix stretch occupies residues 278-295 (GAGILRMVNKAADAVNKM). The BAR domain maps to 299–519 (MNESDAWFEE…AFLPEAKAIA (221 aa)). Position 469 is an N6-acetyllysine (lysine 469).

The protein belongs to the sorting nexin family. In terms of assembly, predominantly forms heterodimers with BAR domain-containing sorting nexins SNX5, SNX6 and SNX32; can self-associate to form homodimers. The heterodimers are proposed to self-assemble into helical arrays on the membrane to stabilize and expand local membrane curvature underlying endosomal tubule formation. Thought to be a component of the originally described retromer complex (also called SNX-BAR retromer) which is a pentamer containing the heterotrimeric retromer cargo-selective complex (CSC), also described as vacuolar protein sorting subcomplex (VPS), and a heterodimeric membrane-deforming subcomplex formed between SNX1 or SNX2 and SNX5 or SNX6 (also called SNX-BAR subcomplex); the respective CSC and SNX-BAR subcomplexes associate with low affinity. Interacts with SNX5, SNX6, SNX32, VPS26A, VPS29, VPS35, FNBP1, KALRN, RHOG (GDP-bound form).

The protein resides in the early endosome membrane. It localises to the cell projection. It is found in the lamellipodium. Functionally, involved in several stages of intracellular trafficking. Interacts with membranes containing phosphatidylinositol 3-phosphate (PtdIns(3P)) or phosphatidylinositol 3,5-bisphosphate (PtdIns(3,5)P2). Acts in part as component of the retromer membrane-deforming SNX-BAR subcomplex. The SNX-BAR retromer mediates retrograde transport of cargo proteins from endosomes to the trans-Golgi network (TGN) and is involved in endosome-to-plasma membrane transport for cargo protein recycling. The SNX-BAR subcomplex functions to deform the donor membrane into a tubular profile called endosome-to-TGN transport carrier (ETC). Can sense membrane curvature and has in vitro vesicle-to-membrane remodeling activity. Required for retrograde endosome-to-TGN transport of TGN38. Promotes KALRN- and RHOG-dependent but retromer-independent membrane remodeling such as lamellipodium formation; the function is dependent on GEF activity of KALRN. The sequence is that of Sorting nexin-2 (SNX2) from Homo sapiens (Human).